We begin with the raw amino-acid sequence, 418 residues long: Cyclin-dependent kinase 15 (418 aa).

Residues 84-369 enclose the Protein kinase domain; the sequence is YLNLEKLGEG…AQDALLHPYF (286 aa). Residues 90–98 and Lys-113 each bind ATP; that span reads LGEGTYATV. The Proton acceptor role is filled by Asp-205.

The protein belongs to the protein kinase superfamily. CMGC Ser/Thr protein kinase family. CDC2/CDKX subfamily. Requires Mg(2+) as cofactor.

The catalysed reaction is L-seryl-[protein] + ATP = O-phospho-L-seryl-[protein] + ADP + H(+). It carries out the reaction L-threonyl-[protein] + ATP = O-phospho-L-threonyl-[protein] + ADP + H(+). In terms of biological role, serine/threonine-protein kinase involved in the control of the eukaryotic cell cycle, whose activity is controlled by an associated cyclin. This is Cyclin-dependent kinase 15 (cdk15) from Danio rerio (Zebrafish).